A 251-amino-acid chain; its full sequence is DNA repair protein RecO (251 aa).

Belongs to the RecO family.

In terms of biological role, involved in DNA repair and RecF pathway recombination. The chain is DNA repair protein RecO from Lactococcus lactis subsp. cremoris (strain MG1363).